Consider the following 230-residue polypeptide: Uracil-DNA glycosylase (230 aa).

Catalysis depends on D70, which acts as the Proton acceptor.

It belongs to the uracil-DNA glycosylase (UDG) superfamily. UNG family.

Its subcellular location is the cytoplasm. It carries out the reaction Hydrolyzes single-stranded DNA or mismatched double-stranded DNA and polynucleotides, releasing free uracil.. In terms of biological role, excises uracil residues from the DNA which can arise as a result of misincorporation of dUMP residues by DNA polymerase or due to deamination of cytosine. The chain is Uracil-DNA glycosylase from Pseudomonas savastanoi pv. phaseolicola (strain 1448A / Race 6) (Pseudomonas syringae pv. phaseolicola (strain 1448A / Race 6)).